The primary structure comprises 448 residues: MGAIPKTGTISPEQKDSQEKNLFQKIWSWEIGVIPLPLYTVLAVIIILAAYYNELPANMLGGFAIIMILGVFLGDIGQRIPILKDIGGPAILSLFVPSFLVFYNVLNSTSLDAVTNLMKTSNFLYFYIACLVVGSILGMNRIVLIQGFIRMFVPLVAGTIAAVAAGILVGFIFGYSAYDSFFFVVVPIIAGGIGEGILPLSIAYSQILGSSADVFVSQLVPAAIIGNVFAIICAALMKKLGDKRPDLNGNGRLVKSKKANEIFNQKEAEAKIDFKLMGAGVLLACTFFIFGGLLEKFIFIPGAILMIISAAAVKYANILPKKMEEGAYQLYKFISSSFTWPLMVGLGILFIPLDDVASVISIPFVIICISVVIAMIGSGYFVGKLMNMYPVESAIVTCCHSGLGGTGDVAILSASGRMGLMPFAQISTRLGGAGTVICATVLLRFFTS.

11 helical membrane passes run 31–51 (IGVI…LAAY), 60–80 (LGGF…GQRI), 86–106 (IGGP…YNVL), 123–143 (FLYF…NRIV), 153–173 (VPLV…GFIF), 182–202 (FFVV…PLSI), 214–234 (VFVS…IICA), 276–293 (LMGA…FGGL), 297–319 (FIFI…ANIL), 333–353 (FISS…FIPL), and 359–379 (VISI…IGSG).

This sequence belongs to the 2-hydroxycarboxylate transporter (2-HCT) (TC 2.A.24) family.

The protein localises to the cell membrane. In terms of biological role, acts as a Na(+)-malate symporter, as it catalyzes malate-dependent uptake of Na(+) and Na(+)-dependent uptake of malate. In Bacillus subtilis (strain 168), this protein is Na(+)-malate symporter.